The chain runs to 3036 residues: DmX-like protein 2 (3036 aa).

3 WD repeats span residues 108–145 (FLSS…ILEE), 167–207 (KTSV…KSSI), and 230–278 (AHPR…EDCL). S326 carries the phosphoserine modification. Residues 417-480 (KQVDHENDDA…EGSPRTYSRL (64 aa)) are disordered. Positions 422–434 (ENDDADREDEEHS) are enriched in acidic residues. Residues 435–473 (QEDRERGLHMKLDHDLSLDRESEAGTGSSEHEDGEREGS) show a composition bias toward basic and acidic residues. S473 carries the phosphoserine modification. The stretch at 492–532 (DRKIETLLTEWNKNPDMLFTIHPVDGTFLVWHVKYLDEYNP) is one WD 4 repeat. Position 588 is a phosphoserine (S588). WD repeat units lie at residues 595 to 634 (HSRS…KSAF), 751 to 803 (LHTS…RKLL), and 878 to 920 (QPSQ…VQAC). The disordered stretch occupies residues 932 to 959 (SLLSVPGQKNVDSSPETSPSVSPMPHSS). Residues S944 and S945 each carry the phosphoserine modification. Over residues 949–959 (SPSVSPMPHSS) the composition is skewed to low complexity. One copy of the WD 8 repeat lies at 1000–1037 (LSSSSIYPVCLAPYLVVTTCSDNKVRFWKCCMEANPEC). 3 positions are modified to phosphoserine: S1140, S1143, and S1151. 2 WD repeats span residues 1163–1204 (PNIK…VTEQ) and 1244–1281 (GTPS…VKFG). 2 positions are modified to phosphoserine: S1287 and S1400. T1417 carries the phosphothreonine modification. Position 1857 is a phosphoserine (S1857). A compositionally biased stretch (basic and acidic residues) spans 1927–1936 (ISHRMDDVPS). The tract at residues 1927–1952 (ISHRMDDVPSHSKALSDGNGSSGIEW) is disordered. A Phosphoserine modification is found at S1984. Positions 1999–2033 (KSTDAREKDKQSDQKASDPNMLLTPQEEDDPEGDT) are disordered. A compositionally biased stretch (basic and acidic residues) spans 2001-2014 (TDAREKDKQSDQKA). T2022 carries the phosphothreonine modification. The segment covering 2024 to 2033 (QEEDDPEGDT) has biased composition (acidic residues). Residues 2122–2153 (GSYERHQIERRRLQAKREHAERRKSWLQKNQD) are a coiled coil. Phosphoserine occurs at positions 2399 and 2640. WD repeat units lie at residues 2761 to 2800 (RNLH…QLVC), 2804 to 2843 (AGNA…SNPK), 2850 to 2892 (CHSK…GNSL), 2898 to 2937 (CHDH…LIHT), 2940 to 2979 (AHDS…LIHS), and 2992 to 3030 (NIGA…NIPN).

As to quaternary structure, interacts with MADD and RAB3GAP.

The protein localises to the cytoplasmic vesicle. The protein resides in the secretory vesicle. Its subcellular location is the synaptic vesicle membrane. It is found in the neuronal dense core vesicle. In terms of biological role, may serve as a scaffold protein for MADD and RAB3GA on synaptic vesicles. Plays a role in the brain as a key controller of neuronal and endocrine homeostatic processes. This chain is DmX-like protein 2 (DMXL2), found in Homo sapiens (Human).